Consider the following 461-residue polypeptide: Photosystem II CP43 reaction center protein (461 aa).

Residues 1–2 constitute a propeptide that is removed on maturation; the sequence is ME. Position 3 is an N-acetylthreonine (Thr-3). At Thr-3 the chain carries Phosphothreonine. A run of 5 helical transmembrane segments spans residues 57-81, 122-143, 166-188, 243-263, and 279-300; these read LFEV…PHLA, LAGP…KRKK, KAMY…RSIT, RPSP…LSYS, and WFNN…ASQA. Glu-355 provides a ligand contact to [CaMn4O5] cluster. A helical transmembrane segment spans residues 435 to 459; it reads RARAAAIGFEKGIDRSREIARKLKP.

This sequence belongs to the PsbB/PsbC family. PsbC subfamily. In terms of assembly, PSII is composed of 1 copy each of membrane proteins PsbA, PsbB, PsbC, PsbD, PsbE, PsbF, PsbH, PsbI, PsbJ, PsbK, PsbL, PsbM, PsbT, PsbY, PsbZ, Psb30/Ycf12, at least 3 peripheral proteins of the oxygen-evolving complex and a large number of cofactors. It forms dimeric complexes. The cofactor is Binds multiple chlorophylls and provides some of the ligands for the Ca-4Mn-5O cluster of the oxygen-evolving complex. It may also provide a ligand for a Cl- that is required for oxygen evolution. PSII binds additional chlorophylls, carotenoids and specific lipids..

The protein resides in the plastid. It is found in the chloroplast thylakoid membrane. Functionally, one of the components of the core complex of photosystem II (PSII). It binds chlorophyll and helps catalyze the primary light-induced photochemical processes of PSII. PSII is a light-driven water:plastoquinone oxidoreductase, using light energy to abstract electrons from H(2)O, generating O(2) and a proton gradient subsequently used for ATP formation. The protein is Photosystem II CP43 reaction center protein of Euglena gracilis.